Here is a 459-residue protein sequence, read N- to C-terminus: Vitronectin (459 aa).

A signal peptide spans 1 to 19 (MAPLRPLLMLALLAWVALA). The SMB domain maps to 20–63 (DQESCKGRCTDGFIAERKCQCDELCSYYQSCCTDYVAECKPQVT). Intrachain disulfides connect Cys24–Cys28, Cys24–Cys40, Cys28–Cys58, Cys38–Cys40, Cys38–Cys51, Cys44–Cys50, and Cys51–Cys58. The short motif at 64–66 (RGD) is the Cell attachment site element. 3 positions are modified to sulfotyrosine: Tyr75, Tyr78, and Tyr80. Asn87 and Asn146 each carry an N-linked (GlcNAc...) asparagine glycan. Hemopexin repeat units follow at residues 135–179 (GKPF…VWGI), 180–227 (KGPI…FKGI), and 228–285 (PDDV…FALM). 2 positions are modified to phosphoserine: Ser289 and Ser378. Residues 338–380 (LKPSQPKMTKSARRSGKRYRSRRGRGRGRGHSRSQKSHRQSRS) are disordered. Residues 347–378 (KSARRSGKRYRSRRGRGRGRGHSRSQKSHRQS) are compositionally biased toward basic residues. Residues Tyr398 and Tyr401 each carry the sulfotyrosine modification. Residues 400-453 (DYKMDWLVPATCEPIQSVYFFSGEEYYRVNLRTQRVDTVTPPYPRSIAQYWLGC) form a Hemopexin 4 repeat.

As to quaternary structure, monomer. Interacts with SERPINE1/PAI1 and C1QBP. Post-translationally, sulfated on tyrosine residues. In terms of processing, N- and O-glycosylated. It has been suggested that the active SMB domain may be permitted considerable disulfide bond heterogeneity or variability, thus two alternate disulfide patterns based on 3D structures are described with 1 disulfide bond conserved in both. Plasma.

It localises to the secreted. Its subcellular location is the extracellular space. Functionally, vitronectin is a cell adhesion and spreading factor found in serum and tissues. Vitronectin interact with glycosaminoglycans and proteoglycans. Is recognized by certain members of the integrin family and serves as a cell-to-substrate adhesion molecule. Inhibitor of the membrane-damaging effect of the terminal cytolytic complement pathway. The polypeptide is Vitronectin (VTN) (Sus scrofa (Pig)).